Consider the following 499-residue polypeptide: Glycerol kinase (499 aa).

T12 is an ADP binding site. ATP-binding residues include T12, T13, and S14. T12 serves as a coordination point for sn-glycerol 3-phosphate. An ADP-binding site is contributed by R16. Sn-glycerol 3-phosphate is bound by residues R82, E83, Y134, and D243. Positions 82, 83, 134, 243, and 244 each coordinate glycerol. 2 residues coordinate ADP: T265 and G308. The ATP site is built by T265, G308, Q312, and G411. An ADP-binding site is contributed by G411.

This sequence belongs to the FGGY kinase family.

It carries out the reaction glycerol + ATP = sn-glycerol 3-phosphate + ADP + H(+). The protein operates within polyol metabolism; glycerol degradation via glycerol kinase pathway; sn-glycerol 3-phosphate from glycerol: step 1/1. With respect to regulation, inhibited by fructose 1,6-bisphosphate (FBP). In terms of biological role, key enzyme in the regulation of glycerol uptake and metabolism. Catalyzes the phosphorylation of glycerol to yield sn-glycerol 3-phosphate. This Agrobacterium fabrum (strain C58 / ATCC 33970) (Agrobacterium tumefaciens (strain C58)) protein is Glycerol kinase.